A 291-amino-acid polypeptide reads, in one-letter code: Protein-export membrane protein SecF (291 aa).

A run of 6 helical transmembrane segments spans residues 19–39, 134–154, 156–176, 187–209, 226–246, and 256–278; these read LVVIPLIILAVALLIIASWYV, LALGGVGVAFLGMSVLVFLMF, VFVPSIAVVVSAFSDIAISVA, LGTVAALLMIIGYSVDSDILLNN, MRTGVTMTLTSIIAMSVMAAV, and AAIGTVLVFGLIADLMNTYLLNL.

Belongs to the SecD/SecF family. SecF subfamily. In terms of assembly, part of the protein translocation apparatus. Forms a complex with SecD.

The protein resides in the cell membrane. In terms of biological role, involved in protein export. In Haloquadratum walsbyi (strain DSM 16790 / HBSQ001), this protein is Protein-export membrane protein SecF.